Consider the following 111-residue polypeptide: COX assembly mitochondrial protein (111 aa).

One can recognise a CHCH domain in the interval 39 to 82 (YKKCANFVQAMADCAKANGMKVFPTCDKQRDEMKSCLLFYQTDE). 2 short sequence motifs (cx9C motif) span residues 42–52 (CANFVQAMADC) and 64–74 (CDKQRDEMKSC). Cystine bridges form between C42/C74 and C52/C64.

This sequence belongs to the CMC family.

It is found in the mitochondrion inner membrane. In terms of biological role, required for mitochondrial cytochrome c oxidase (COX) assembly and respiration. Binds copper. May be involved in copper trafficking and distribution to mitochondrial COX and SOD1. This chain is COX assembly mitochondrial protein (CMC1), found in Saccharomyces cerevisiae (strain YJM789) (Baker's yeast).